The chain runs to 244 residues: MRQIKLIIEYDGTNYSGWQVQPNGITIQQLIEASLATMLGEPVKLHSSGRTDAGVHALGMVAAFKTGKLLPLRAFSDGLNALLPNDIAIRDAVEAPLSFNPRADAKSKHYRYTIYNAVRRSPLARLSSWHLRGALDIERMQAAASHFVGEHDFAAFRASNCAAKTTVRRLFSVSVAKDGESVIIDVHGSGFLKNMVRIIAGTLAEVGQGKKNPDAVPGLLVSGDRAASGITAPPQGLCLVEVFY.

Aspartate 52 (nucleophile) is an active-site residue. Tyrosine 110 lines the substrate pocket.

It belongs to the tRNA pseudouridine synthase TruA family. As to quaternary structure, homodimer.

It catalyses the reaction uridine(38/39/40) in tRNA = pseudouridine(38/39/40) in tRNA. Formation of pseudouridine at positions 38, 39 and 40 in the anticodon stem and loop of transfer RNAs. The polypeptide is tRNA pseudouridine synthase A (Geotalea uraniireducens (strain Rf4) (Geobacter uraniireducens)).